Consider the following 582-residue polypeptide: MGGRARSILRWLRHHRSRRVSSSSFHLTTTGDDTVKDLHDPRREDAEGDGWEEVHEGPESDPEEYIALVSEDAGTHLPVRTEPRRMDPSKKEPDFFTEYGEANRYKVSEVIGKGSYGVVAAAVDTQTGERVAIKKINDVFDHVSDATRILREIKLLRLLRHPDIVEIKHIMLPPSRREFRDIYVIFELMESDLHQVIKANDDLTPEHHQFFLYQLLRGMKYIHAASVFHRDLKPKNILANADCKLKVCDFGLARVSFNDTPSAIFWTDYVATRWYRAPELCGSFFSKYTPAIDIWSVGCIFAELLTGKPLFPGKNVVHQLDLMTDLLGTPSAESLAKIRNEKARRYLSNMRKKPRVPFTKKFPGVDPMALHLLERLLAFDPKDRPSAEEALTDPYFNGLANSEREPIAQPISKLEFEFEKRKLAKDDVRELIYREILEYHPHMLQEYLRGGDQMSFMYPSGVDRFKRQFAHLEEGVSKGEKSSPQLRQNASLPRERAIGNKHGDDEYHAKLNVGEKPCHASVTDGISKPLMSARSLLKSESISASKCIGEKPKQDRDQEDSLTESMDETADEVSEKVAQLKT.

The tract at residues 22 to 61 (SSSFHLTTTGDDTVKDLHDPRREDAEGDGWEEVHEGPESD) is disordered. Residues 33 to 45 (DTVKDLHDPRRED) show a composition bias toward basic and acidic residues. Residues 105–396 (YKVSEVIGKG…AEEALTDPYF (292 aa)) form the Protein kinase domain. Residues 111-119 (IGKGSYGVV) and lysine 134 each bind ATP. Catalysis depends on aspartate 231, which acts as the Proton acceptor. At threonine 267 the chain carries Phosphothreonine. Residues 267–269 (TDY) carry the TXY motif. Phosphotyrosine is present on tyrosine 269. Disordered stretches follow at residues 474-502 (EGVS…GNKH) and 542-582 (ISAS…QLKT). Polar residues predominate over residues 482 to 491 (SSPQLRQNAS). A compositionally biased stretch (basic and acidic residues) spans 493–502 (PRERAIGNKH). Positions 557–572 (DQEDSLTESMDETADE) are enriched in acidic residues.

This sequence belongs to the protein kinase superfamily. CMGC Ser/Thr protein kinase family. MAP kinase subfamily. Post-translationally, dually phosphorylated on Thr-267 and Tyr-269, which activates the enzyme.

The catalysed reaction is L-seryl-[protein] + ATP = O-phospho-L-seryl-[protein] + ADP + H(+). The enzyme catalyses L-threonyl-[protein] + ATP = O-phospho-L-threonyl-[protein] + ADP + H(+). With respect to regulation, activated by threonine and tyrosine phosphorylation. The protein is Mitogen-activated protein kinase 17 (MPK17) of Oryza sativa subsp. japonica (Rice).